Reading from the N-terminus, the 131-residue chain is D-ribose pyranase (131 aa).

Histidine 20 (proton donor) is an active-site residue. Substrate contacts are provided by residues aspartate 28, histidine 98, and 120-122 (YAN).

Belongs to the RbsD / FucU family. RbsD subfamily. As to quaternary structure, homodecamer.

It localises to the cytoplasm. The enzyme catalyses beta-D-ribopyranose = beta-D-ribofuranose. The protein operates within carbohydrate metabolism; D-ribose degradation; D-ribose 5-phosphate from beta-D-ribopyranose: step 1/2. Catalyzes the interconversion of beta-pyran and beta-furan forms of D-ribose. The sequence is that of D-ribose pyranase from Clostridium perfringens (strain SM101 / Type A).